Consider the following 262-residue polypeptide: Flap endonuclease Xni (262 aa).

D105 is a Mg(2+) binding site. One can recognise a 5'-3' exonuclease domain in the interval 162-259 (ERSQFLDLMA…VIDSQPEKTI (98 aa)). Residues L172, A173, P181, I183, and I186 each contribute to the K(+) site. The interval 185–190 (GIGPKS) is interaction with DNA.

This sequence belongs to the Xni family. Requires Mg(2+) as cofactor. K(+) is required as a cofactor.

In terms of biological role, has flap endonuclease activity. During DNA replication, flap endonucleases cleave the 5'-overhanging flap structure that is generated by displacement synthesis when DNA polymerase encounters the 5'-end of a downstream Okazaki fragment. The protein is Flap endonuclease Xni of Shewanella baltica (strain OS185).